Here is a 1383-residue protein sequence, read N- to C-terminus: MAQTHAMMSQFNGRKRVRKFFGKIPEVAEMPNLIEVQKASYDQFLMIEEPKGGRPDEGLQAVFKSVFPISDFSGTAMLEFVGYEFDLPKFDVEECRQRDLTYAAPLKVILRLIVFDIDEDTGSKDIKDIKEQGVYMGDMPLMTTNGTFIVNGTERVIVSQMHRSPGVFFDHDKGKSHSSGKLLFAARVIPYRGSWLDIEFDAKDIIYARIDRRRKIPVTSLLMALGMDGSDILSTFYDKVTYERDGEGWRVPYSVDRFKGMKLISDLIDADSGEVVAEAGKKLTVRTAKSLAEKGLKAVKVSEDDLLGCYLAEDIVNYETGEIYLEAGDEIDEKVLKILLDVRADQINILDIDHMNIGAYIRNTLKVDKNESRQDALFDIYRVMRPGEPPTIDTAEAMFHSLFFDPERYDLSAVGRVKMNLRMDLDCPDTVRVLRQEDILAVVKMLVELRDGRGEIDDIDNLGNRRVRSVGELMENQYRIGLLRMERAIKERMSSVEIDTVMPQDLINAKPAAAAVREFFGSSQLSQFMDQTNPLSEITHKRRLSALGPGGLTRERAGFEVRDVHPTHYGRICPIETPEGPNIGLINSLATFARVNKYGFIESPYRKIIDGKVTKEVIYLSAMEEAKHYVAQANSSLDSEGRFTEEFVVCRHAGEVLMAPRDHVDLMDVSPKQLVSVAAALIPFLENDDANRALMGSNMQRQAVPLVRAEAPFVGTGMEAVVARDSGAAVSAKRSGIVDQVDATRIVIRATEDLDPSKSGVDIYRLQKFQRSNQSTCINQRPLVHVGDRVEKGDIIADGPSTDLGDLALGRNVLVAFMPWNGYNYEDSILLSERIVADDVFTSIHIEEFEVAARDTKLGPEEITRDIPNVAEEALRNLDEAGIIYIGAEVQPGDILVGKITPKGESPMTPEEKLLRAIFGEKASDVRDTSMRMPPGTFGTVVEVRVFNRHGVEKDERAMAIEREEIERLAKDRDDEQSILDRNVYARLTDMLTGKVAVEGPKGFSESKKLDSTVMGRYPRSQWWQFAVEDEKLQNEIEALRKQYDESKEALQRRFMDKVEKVQRGDEMPPGVMKMVKVFVAVKRKIQPGDKMAGRHGNKGVVSRILPVEDMPFLEDGTHADIVLNPLGVPSRMNVGQILETHLGWACAGMGKKIGDLLELYQETGDILPLRQRIENLMPDDNHNEPVRQYDNESLYKLALQMKKGVSIATPVFDGAHESDINMMLEDAGLDSSGQVTLYDGRTGEPFDRPVTVGYIYMLKLHHLVDDKIHARSIGPYSLVTQQPLGGKAQFGGQRFGEMEVWALEAYGAAYTLQEMLTVKSDDVAGRTKVYEAIVRGDDTFEAGIPESFNVLVKEMRSLALNVELDDARELIAQRVLSDRVEQ.

It belongs to the RNA polymerase beta chain family. As to quaternary structure, the RNAP catalytic core consists of 2 alpha, 1 beta, 1 beta' and 1 omega subunit. When a sigma factor is associated with the core the holoenzyme is formed, which can initiate transcription.

The catalysed reaction is RNA(n) + a ribonucleoside 5'-triphosphate = RNA(n+1) + diphosphate. Its function is as follows. DNA-dependent RNA polymerase catalyzes the transcription of DNA into RNA using the four ribonucleoside triphosphates as substrates. The protein is DNA-directed RNA polymerase subunit beta of Bartonella tribocorum (strain CIP 105476 / IBS 506).